A 429-amino-acid chain; its full sequence is Palmitoyltransferase SWF1 (429 aa).

Topologically, residues 1–3 (MGT) are lumenal. A helical transmembrane segment spans residues 4 to 24 (IAIIAAVILGISFMTFVAFFG). The Cytoplasmic segment spans residues 25-79 (RLPALRNTPISFLHRLIWIHLPNGILTVDRTLTNGRLTTSLTRLGRHLWYDQHPT). A helical transmembrane segment spans residues 80-100 (ILIFFFLLLSVGEYLYLPVAW). The Lumenal segment spans residues 101-112 (PHFSFTHKFFGT). Residues 113-133 (IAILCPYIFLYLSAYTDPGVI) traverse the membrane as a helical segment. At 134–201 (NAKTHVREMA…CVGANNQRWF (68 aa)) the chain is on the cytoplasmic side. A DHHC domain is found at 156-206 (TSCETCHLLKPARSKHCSICKKCVGRMDHHCIFINNCVGANNQRWFILLLL). Residues 202-222 (ILLLLSTAILTLYGGVLGLVI) form a helical membrane-spanning segment. The Lumenal portion of the chain corresponds to 223–274 (IRAKIQARFPYWTLMPWWTSTQAWNSGDLDFHRWLLLWSWGLQSGVAMGGVT). Residues 275 to 295 (LLALLTTPLVWGLLGYHLWLV) traverse the membrane as a helical segment. Residues 296 to 429 (YCGTTTNESM…ERGRNRRRSS (134 aa)) are Cytoplasmic-facing. A compositionally biased stretch (basic and acidic residues) spans 408-421 (GRSPVDEREFGRER). The disordered stretch occupies residues 408–429 (GRSPVDEREFGRERGRNRRRSS).

Belongs to the DHHC palmitoyltransferase family. SWF1 subfamily.

Its subcellular location is the endoplasmic reticulum membrane. It catalyses the reaction L-cysteinyl-[protein] + hexadecanoyl-CoA = S-hexadecanoyl-L-cysteinyl-[protein] + CoA. Functionally, palmitoyltransferase that targets several endosomal SNAREs. Palmitoylates the SNAREs at cysteine residues close to the cytoplasmic end of their transmembrane domain. May have a role in the cellular quality control of transmembrane domain-containing proteins. The sequence is that of Palmitoyltransferase SWF1 (swf-1) from Neurospora crassa (strain ATCC 24698 / 74-OR23-1A / CBS 708.71 / DSM 1257 / FGSC 987).